A 174-amino-acid polypeptide reads, in one-letter code: CDP-archaeol synthase (174 aa).

5 helical membrane-spanning segments follow: residues 14–34, 59–79, 83–103, 118–138, and 149–169; these read ILEA…PVVA, IEGL…AALA, MLLA…DMAG, APLL…IALG, and AAAA…LLGL.

Belongs to the CDP-archaeol synthase family. The cofactor is Mg(2+).

It is found in the cell membrane. The enzyme catalyses 2,3-bis-O-(geranylgeranyl)-sn-glycerol 1-phosphate + CTP + H(+) = CDP-2,3-bis-O-(geranylgeranyl)-sn-glycerol + diphosphate. It functions in the pathway membrane lipid metabolism; glycerophospholipid metabolism. In terms of biological role, catalyzes the formation of CDP-2,3-bis-(O-geranylgeranyl)-sn-glycerol (CDP-archaeol) from 2,3-bis-(O-geranylgeranyl)-sn-glycerol 1-phosphate (DGGGP) and CTP. This reaction is the third ether-bond-formation step in the biosynthesis of archaeal membrane lipids. The polypeptide is CDP-archaeol synthase (Aeropyrum pernix (strain ATCC 700893 / DSM 11879 / JCM 9820 / NBRC 100138 / K1)).